Reading from the N-terminus, the 295-residue chain is Ethanolamine ammonia-lyase small subunit (295 aa).

Adenosylcob(III)alamin is bound by residues Val-207, Glu-228, and Cys-258.

The protein belongs to the EutC family. In terms of assembly, the basic unit is a heterodimer which dimerizes to form tetramers. The heterotetramers trimerize; 6 large subunits form a core ring with 6 small subunits projecting outwards. Adenosylcob(III)alamin is required as a cofactor.

The protein resides in the bacterial microcompartment. The catalysed reaction is ethanolamine = acetaldehyde + NH4(+). The protein operates within amine and polyamine degradation; ethanolamine degradation. Functionally, catalyzes the deamination of various vicinal amino-alcohols to oxo compounds. Allows this organism to utilize ethanolamine as the sole source of nitrogen and carbon in the presence of external vitamin B12. In Escherichia coli O139:H28 (strain E24377A / ETEC), this protein is Ethanolamine ammonia-lyase small subunit.